The chain runs to 230 residues: Demethylmenaquinone methyltransferase (230 aa).

S-adenosyl-L-methionine-binding positions include threonine 62, aspartate 80, 100–101 (DA), and serine 117.

This sequence belongs to the class I-like SAM-binding methyltransferase superfamily. MenG/UbiE family.

It catalyses the reaction a 2-demethylmenaquinol + S-adenosyl-L-methionine = a menaquinol + S-adenosyl-L-homocysteine + H(+). The protein operates within quinol/quinone metabolism; menaquinone biosynthesis; menaquinol from 1,4-dihydroxy-2-naphthoate: step 2/2. Methyltransferase required for the conversion of demethylmenaquinol (DMKH2) to menaquinol (MKH2). This is Demethylmenaquinone methyltransferase from Mycobacterium sp. (strain KMS).